Here is a 299-residue protein sequence, read N- to C-terminus: Zinc finger protein-like 1 homolog (299 aa).

The B box-type; degenerate zinc-finger motif lies at M1 to W43. The RING-type; atypical zinc-finger motif lies at C53–S101. A disordered region spans residues A200–T231. S215 carries the post-translational modification Phosphoserine. A helical membrane pass occupies residues W256–L276.

This sequence belongs to the ZFPL1 family.

The protein localises to the membrane. In Drosophila melanogaster (Fruit fly), this protein is Zinc finger protein-like 1 homolog.